The chain runs to 55 residues: MAKDKDVRPIIKLKSTAGTGYTYVTRKNRRNDPDRMVLKKYDPKIRQHVEFREER.

It belongs to the bacterial ribosomal protein bL33 family.

This is Large ribosomal subunit protein bL33 from Pseudarthrobacter chlorophenolicus (strain ATCC 700700 / DSM 12829 / CIP 107037 / JCM 12360 / KCTC 9906 / NCIMB 13794 / A6) (Arthrobacter chlorophenolicus).